Reading from the N-terminus, the 374-residue chain is Cathepsin W (374 aa).

The signal sequence occupies residues 1 to 21 (MAITVYLSCLLVLSMAGLAQG). A propeptide spanning residues 22–127 (IKSSLRSQDP…EVGSEEWGES (106 aa)) is cleaved from the precursor. Cystine bridges form between Cys150–Cys191 and Cys184–Cys226. Residue Cys153 is part of the active site. A glycan (N-linked (GlcNAc...) asparagine) is linked at Asn205. Active-site residues include His291 and Asn329. N-linked (GlcNAc...) asparagine glycosylation occurs at Asn347.

This sequence belongs to the peptidase C1 family.

It localises to the endoplasmic reticulum. Its function is as follows. May have a specific function in the mechanism or regulation of T-cell cytolytic activity. This Felis catus (Cat) protein is Cathepsin W (CTSW).